The following is a 221-amino-acid chain: Endo-1,4-beta-xylanase 2 (221 aa).

The first 19 residues, 1–19 (MVAFTSLLAGFAAIAGVLS), serve as a signal peptide directing secretion. Positions 32-221 (QTIGPGTGYS…SSGSASITVS (190 aa)) constitute a GH11 domain. 2 N-linked (GlcNAc...) asparagine glycosylation sites follow: Asn-69 and Asn-92. Glu-117 acts as the Nucleophile in catalysis. The active-site Proton donor is Glu-208.

The protein belongs to the glycosyl hydrolase 11 (cellulase G) family.

It localises to the secreted. It carries out the reaction Endohydrolysis of (1-&gt;4)-beta-D-xylosidic linkages in xylans.. It participates in glycan degradation; xylan degradation. In terms of biological role, endo-1,4-beta-xylanase involved in the hydrolysis of xylan, a major structural heterogeneous polysaccharide found in plant biomass representing the second most abundant polysaccharide in the biosphere, after cellulose. The sequence is that of Endo-1,4-beta-xylanase 2 (Xyn2) from Trichoderma harzianum (Hypocrea lixii).